We begin with the raw amino-acid sequence, 492 residues long: Trypanothione reductase (492 aa).

35–52 (DVQTVHGPPFFAALGGTC) is an FAD binding site. A disulfide bond links cysteine 52 and cysteine 57. The Proton acceptor role is filled by histidine 461.

This sequence belongs to the class-I pyridine nucleotide-disulfide oxidoreductase family. Homodimer. FAD is required as a cofactor.

The protein localises to the cytoplasm. The enzyme catalyses trypanothione + NADP(+) = trypanothione disulfide + NADPH + H(+). Its function is as follows. Trypanothione is the parasite analog of glutathione; this enzyme is the equivalent of glutathione reductase. In Trypanosoma congolense, this protein is Trypanothione reductase (TPR).